The chain runs to 337 residues: Pentalenene synthase (337 aa).

Positions 80, 84, 219, 223, and 227 each coordinate Mg(2+). Residues 80–84 (DDLFD) carry the DDXXD motif motif.

It belongs to the terpene synthase family. As to quaternary structure, monomer. Mg(2+) is required as a cofactor.

The enzyme catalyses (2E,6E)-farnesyl diphosphate = pentalenene + diphosphate. Its pathway is sesquiterpene biosynthesis; pentalenene biosynthesis; pentalenene from farnesyl diphosphate: step 1/1. It participates in antibiotic biosynthesis; pentalenolactone biosynthesis. Catalyzes the cyclization of farnesyl diphosphate (FPP) to the tricyclic sesquiterpene pentalenene, which is the hydrocarbon precursor of the pentalenolactone family of antibiotics produced by a variety of Streptomyces species. The chain is Pentalenene synthase (pntA) from Streptomyces arenae.